Here is a 224-residue protein sequence, read N- to C-terminus: Phosphoglycolate phosphatase (224 aa).

The active-site Nucleophile is the Asp11. Mg(2+) is bound by residues Asp11, Asp13, and Asp177.

It belongs to the HAD-like hydrolase superfamily. CbbY/CbbZ/Gph/YieH family. Mg(2+) is required as a cofactor.

It catalyses the reaction 2-phosphoglycolate + H2O = glycolate + phosphate. The protein operates within organic acid metabolism; glycolate biosynthesis; glycolate from 2-phosphoglycolate: step 1/1. Its function is as follows. Specifically catalyzes the dephosphorylation of 2-phosphoglycolate. Is involved in the dissimilation of the intracellular 2-phosphoglycolate formed during the DNA repair of 3'-phosphoglycolate ends, a major class of DNA lesions induced by oxidative stress. The sequence is that of Phosphoglycolate phosphatase from Haemophilus influenzae (strain ATCC 51907 / DSM 11121 / KW20 / Rd).